A 427-amino-acid polypeptide reads, in one-letter code: Gamma-glutamyl phosphate reductase (427 aa).

It belongs to the gamma-glutamyl phosphate reductase family.

It localises to the cytoplasm. It catalyses the reaction L-glutamate 5-semialdehyde + phosphate + NADP(+) = L-glutamyl 5-phosphate + NADPH + H(+). It participates in amino-acid biosynthesis; L-proline biosynthesis; L-glutamate 5-semialdehyde from L-glutamate: step 2/2. Functionally, catalyzes the NADPH-dependent reduction of L-glutamate 5-phosphate into L-glutamate 5-semialdehyde and phosphate. The product spontaneously undergoes cyclization to form 1-pyrroline-5-carboxylate. In Brucella melitensis biotype 2 (strain ATCC 23457), this protein is Gamma-glutamyl phosphate reductase.